The sequence spans 396 residues: Probable peptidoglycan glycosyltransferase FtsW (396 aa).

Over 1–27 the chain is Cytoplasmic; the sequence is MPFLDKVKQQYEDWTRITPSNLLYDRA. A helical membrane pass occupies residues 28-48; the sequence is LLLLFFVLLLIGLLAVSSASI. Residues 49-64 are Periplasmic-facing; sequence PVGTRLFKDPFYFAKR. Residues 65-85 traverse the membrane as a helical segment; that stretch reads DAIYVFLSCVTCYLCVQVPME. Over 86 to 93 the chain is Cytoplasmic; that stretch reads KWEQWHVR. A helical transmembrane segment spans residues 94-114; sequence LFAFAIFLLILVLIPGIGLSV. At 115–122 the chain is on the periplasmic side; the sequence is NGARRWIP. The helical transmembrane segment at 123–143 threads the bilayer; that stretch reads MVLFNFQPAEFAKLALTCFLA. Residues 144–157 lie on the Cytoplasmic side of the membrane; it reads SYFTRKYDEVRSRK. A helical membrane pass occupies residues 158 to 178; the sequence is LSAFKPFALMGLMGLFLLSQP. The Periplasmic segment spans residues 179–183; sequence DLGST. 2 consecutive transmembrane segments (helical) span residues 184–204 and 205–225; these read VVLFVITFGLLFIVGANFWQF and VGLMAFGGLLFVWLVLSSAYR. Residues 226 to 285 are Periplasmic-facing; sequence LKRFTGFLDPFKDPYGTGFQLSNSLMAFGRGEWVGEGLGNSIQKLEYLPEAHTDFVMAVV. A helical transmembrane segment spans residues 286 to 306; that stretch reads GEEFGFLGILVIVILLGLLIF. Residues 307 to 323 are Cytoplasmic-facing; the sequence is RAMKIGRESLLLEQRFK. Residues 324–344 form a helical membrane-spanning segment; the sequence is GFFAFGISFWIFFQGFVNLGM. Topologically, residues 345–355 are periplasmic; that stretch reads SLGLLPTKGLT. Residues 356 to 376 traverse the membrane as a helical segment; the sequence is FPLISYGGSSLIIMSMTIGLL. At 377 to 396 the chain is on the cytoplasmic side; it reads LRIDHENRLMRIGQARLRDD.

This sequence belongs to the SEDS family. FtsW subfamily.

It is found in the cell inner membrane. The catalysed reaction is [GlcNAc-(1-&gt;4)-Mur2Ac(oyl-L-Ala-gamma-D-Glu-L-Lys-D-Ala-D-Ala)](n)-di-trans,octa-cis-undecaprenyl diphosphate + beta-D-GlcNAc-(1-&gt;4)-Mur2Ac(oyl-L-Ala-gamma-D-Glu-L-Lys-D-Ala-D-Ala)-di-trans,octa-cis-undecaprenyl diphosphate = [GlcNAc-(1-&gt;4)-Mur2Ac(oyl-L-Ala-gamma-D-Glu-L-Lys-D-Ala-D-Ala)](n+1)-di-trans,octa-cis-undecaprenyl diphosphate + di-trans,octa-cis-undecaprenyl diphosphate + H(+). The protein operates within cell wall biogenesis; peptidoglycan biosynthesis. Functionally, peptidoglycan polymerase that is essential for cell division. This Pasteurella multocida (strain Pm70) protein is Probable peptidoglycan glycosyltransferase FtsW.